A 71-amino-acid polypeptide reads, in one-letter code: High-potential iron-sulfur protein (71 aa).

Residue Q1 is modified to Pyrrolidone carboxylic acid. 4 residues coordinate [4Fe-4S] cluster: C37, C40, C50, and C64.

The protein belongs to the high-potential iron-sulfur protein (HiPIP) family. In terms of assembly, homodimer.

Its function is as follows. Specific class of high-redox-potential 4Fe-4S ferredoxins. Functions in anaerobic electron transport in most purple and in some other photosynthetic bacteria and in at least one genus (Paracoccus) of halophilic, denitrifying bacteria. The sequence is that of High-potential iron-sulfur protein (hip) from Halomonas halodenitrificans (strain ATCC 12084 / NCIMB 8669) (Paracoccus halodenitrificans).